Reading from the N-terminus, the 100-residue chain is Urease subunit gamma (100 aa).

This sequence belongs to the urease gamma subunit family. Heterotrimer of UreA (gamma), UreB (beta) and UreC (alpha) subunits. Three heterotrimers associate to form the active enzyme.

It localises to the cytoplasm. The enzyme catalyses urea + 2 H2O + H(+) = hydrogencarbonate + 2 NH4(+). The protein operates within nitrogen metabolism; urea degradation; CO(2) and NH(3) from urea (urease route): step 1/1. The chain is Urease subunit gamma from Cupriavidus taiwanensis (strain DSM 17343 / BCRC 17206 / CCUG 44338 / CIP 107171 / LMG 19424 / R1) (Ralstonia taiwanensis (strain LMG 19424)).